Consider the following 1578-residue polypeptide: Chitinase ChiA (1578 aa).

The first 19 residues, 1-19 (MKHYYRLLFLLLFPLLASA), serve as a signal peptide directing secretion. Positions 25-466 (KKVVGYYAQW…NQVDTSFGSV (442 aa)) constitute a GH18 1 domain. The GH18N stretch occupies residues 26–446 (KVVGYYAQWS…GGMIWELSQD (421 aa)). Chitin is bound by residues 92–93 (DA) and 119–122 (GGWT). The active-site Proton donor is glutamate 162. Residues tyrosine 163, 249–252 (FGYD), and tryptophan 441 contribute to the chitin site. A CNA-B domain is found at 485–536 (TDVTVELRNASNAVIQTVVSANGNFAFNNLTSGQNYSLTALKATYTFTPVTL). The tract at residues 1142–1462 (KIILGYAHSW…GLMTWSVNWD (321 aa)) is GH18C. In terms of domain architecture, GH18 2 spans 1142–1483 (KIILGYAHSW…KAYAAYFASQ (342 aa)). Catalysis depends on glutamate 1264, which acts as the Proton donor. The CTD stretch occupies residues 1473 to 1578 (SKAYAAYFAS…KSFKVMNFLN (106 aa)).

Belongs to the glycosyl hydrolase 18 family. Chitinase class II subfamily.

It is found in the secreted. It catalyses the reaction Random endo-hydrolysis of N-acetyl-beta-D-glucosaminide (1-&gt;4)-beta-linkages in chitin and chitodextrins.. Functionally, major extracellular chitinase, which is essential for chitin utilization. This chain is Chitinase ChiA (chiA), found in Flavobacterium johnsoniae (strain ATCC 17061 / DSM 2064 / JCM 8514 / BCRC 14874 / CCUG 350202 / NBRC 14942 / NCIMB 11054 / UW101) (Cytophaga johnsonae).